We begin with the raw amino-acid sequence, 102 residues long: UPF0213 protein XAC3202 (102 aa).

The region spanning 5–80 (KPWHLYLLLC…KRLPRARKLA (76 aa)) is the GIY-YIG domain.

This sequence belongs to the UPF0213 family.

This chain is UPF0213 protein XAC3202, found in Xanthomonas axonopodis pv. citri (strain 306).